A 430-amino-acid polypeptide reads, in one-letter code: Protein translocase subunit SecY (430 aa).

10 helical membrane passes run 18-38, 68-88, 117-137, 148-168, 179-199, 215-235, 270-290, 308-328, 368-388, and 390-410; these read IFFTLAMLVIFKIGTYIPAPG, FSIFAMGIMPYITASIVMQLL, FAIILAFIQSIGMAFQFNNYL, MSYLLIAIVLTTGTAFLLWLG, GISIIIFAGILSTLPSSLIQF, LQVAGLVIGLVLLTMGAVYVL, VIPVIFAMAFFLLPRTLTMFF, NIGMVIYIILIIAFTYFYAFV, FVGSIFLAVIAILPILATKFM, and LPQSIQVGGTSLLIVIGVAIE.

The protein belongs to the SecY/SEC61-alpha family. As to quaternary structure, component of the Sec protein translocase complex. Heterotrimer consisting of SecY, SecE and SecG subunits. The heterotrimers can form oligomers, although 1 heterotrimer is thought to be able to translocate proteins. Interacts with the ribosome. Interacts with SecDF, and other proteins may be involved. Interacts with SecA.

The protein localises to the cell membrane. In terms of biological role, the central subunit of the protein translocation channel SecYEG. Consists of two halves formed by TMs 1-5 and 6-10. These two domains form a lateral gate at the front which open onto the bilayer between TMs 2 and 7, and are clamped together by SecE at the back. The channel is closed by both a pore ring composed of hydrophobic SecY resides and a short helix (helix 2A) on the extracellular side of the membrane which forms a plug. The plug probably moves laterally to allow the channel to open. The ring and the pore may move independently. The sequence is that of Protein translocase subunit SecY from Staphylococcus carnosus (strain TM300).